The chain runs to 409 residues: Peptidase T (409 aa).

Zn(2+) is bound at residue histidine 78. Aspartate 80 is an active-site residue. Aspartate 140 serves as a coordination point for Zn(2+). Residue glutamate 173 is the Proton acceptor of the active site. 3 residues coordinate Zn(2+): glutamate 174, aspartate 196, and histidine 379.

It belongs to the peptidase M20B family. Zn(2+) is required as a cofactor.

It is found in the cytoplasm. The catalysed reaction is Release of the N-terminal residue from a tripeptide.. Cleaves the N-terminal amino acid of tripeptides. This Salmonella paratyphi A (strain ATCC 9150 / SARB42) protein is Peptidase T.